A 140-amino-acid polypeptide reads, in one-letter code: Transcription antitermination protein NusB (140 aa).

It belongs to the NusB family.

Involved in transcription antitermination. Required for transcription of ribosomal RNA (rRNA) genes. Binds specifically to the boxA antiterminator sequence of the ribosomal RNA (rrn) operons. This Sorangium cellulosum (strain So ce56) (Polyangium cellulosum (strain So ce56)) protein is Transcription antitermination protein NusB.